A 188-amino-acid chain; its full sequence is Large ribosomal subunit protein eL18A (188 aa).

Residues 153–188 (GKAPSTPHSRTKPYVLSKGRKFERARGRRASRGYKN) form a disordered region. The segment covering 178–188 (RGRRASRGYKN) has biased composition (basic residues).

It belongs to the eukaryotic ribosomal protein eL18 family. As to quaternary structure, component of the large ribosomal subunit.

It is found in the cytoplasm. In terms of biological role, component of the large ribosomal subunit. The ribosome is a large ribonucleoprotein complex responsible for the synthesis of proteins in the cell. This Xenopus laevis (African clawed frog) protein is Large ribosomal subunit protein eL18A (rpl18-a).